Reading from the N-terminus, the 263-residue chain is MSTSIKAIKESLEAVTSLLDPLFQELATDARLGVQKALKSRQKAIQADLAEEERLEAMLSYEKALYKEGYQAIAGIDEVGRGPLAGPVVAACVILPQHCKIKGLNDSKKIPKSKHETIYQAVKEKALAIGIGIIDNQLIDEVNIYEATKLAMLEAIKQLEGQLTQPDYLLIDAMTLDIAISQQSILKGDANSLSIAAASIVAKVTRDQMMANYDRIFPGYGFAKNAGYGTKEHLQGLKAYGITPIHRKSFEPVKSMCCNSTNP.

The RNase H type-2 domain maps to 71–262; it reads QAIAGIDEVG…VKSMCCNSTN (192 aa). Aspartate 77, glutamate 78, and aspartate 172 together coordinate a divalent metal cation.

Belongs to the RNase HII family. It depends on Mn(2+) as a cofactor. Mg(2+) is required as a cofactor.

Its subcellular location is the cytoplasm. The catalysed reaction is Endonucleolytic cleavage to 5'-phosphomonoester.. Its function is as follows. Endonuclease that specifically degrades the RNA of RNA-DNA hybrids. This Streptococcus pyogenes serotype M2 (strain MGAS10270) protein is Ribonuclease HII.